We begin with the raw amino-acid sequence, 530 residues long: Ubiquitin carboxyl-terminal hydrolase 17-like protein 22 (530 aa).

The region spanning 80–375 (AGLQNMGNTC…QAYVLFYIQK (296 aa)) is the USP domain. The active-site Nucleophile is the Cys89. Residue His334 is the Proton acceptor of the active site. Basic and acidic residues-rich tracts occupy residues 382 to 392 (SESVSRGREPR) and 398 to 412 (DTDRRATQGELKRDH). 2 disordered regions span residues 382 to 412 (SESVSRGREPRALGAEDTDRRATQGELKRDH) and 476 to 530 (KNHH…LVCQ). Positions 484-495 (SSLLKLSSTTPT) are enriched in low complexity. The span at 496 to 505 (HQESMNTGTL) shows a compositional bias: polar residues. The span at 510–524 (GRARRSKGKNKHSKR) shows a compositional bias: basic residues.

Belongs to the peptidase C19 family. USP17 subfamily.

The protein resides in the nucleus. It is found in the endoplasmic reticulum. It carries out the reaction Thiol-dependent hydrolysis of ester, thioester, amide, peptide and isopeptide bonds formed by the C-terminal Gly of ubiquitin (a 76-residue protein attached to proteins as an intracellular targeting signal).. Its function is as follows. Deubiquitinating enzyme that removes conjugated ubiquitin from specific proteins to regulate different cellular processes that may include cell proliferation, progression through the cell cycle, apoptosis, cell migration, and the cellular response to viral infection. This Homo sapiens (Human) protein is Ubiquitin carboxyl-terminal hydrolase 17-like protein 22 (USP17L22).